A 795-amino-acid polypeptide reads, in one-letter code: MLSQVYRCGFQPFNQHLLPWVKCTTVFRSHCIQPSVIRHVRSWSNIPFITVPLSRTHGKSFAHRSELKHAKRIVVKLGSAVVTRGDECGLALGRLASIVEQVSVLQNQGREMMLVTSGAVAFGKQRLRHEILLSQSVRQALHSGQNQLKEMAIPVLEARACAAAGQSGLMALYEAMFTQYSICAAQILVTNLDFHDEQKRRNLNGTLHELLRMNIVPIVNTNDAVVPPAEPNSDLQGVNVISVKDNDSLAARLAVEMKTDLLIVLSDVEGLFDSPPGSDDAKLIDIFYPGDQQSVTFGTKSRVGMGGMEAKVKAALWALQGGTSVVIANGTHPKVSGHVITDIVEGKKVGTFFSEVKPAGPTVEQQGEMARSGGRMLATLEPEQRAEIIHHLADLLTDQRDEILLANKKDLEEAEGRLAAPLLKRLSLSTSKLNSLAIGLRQIAASSQDSVGRVLRRTRIAKNLELEQVTVPIGVLLVIFESRPDCLPQVAALAIASGNGLLLKGGKEAAHSNRILHLLTQEALSIHGVKEAVQLVNTREEVEDLCRLDKMIDLIIPRGSSQLVRDIQKAAKGIPVMGHSEGICHMYVDSEASVDKVTRLVRDSKCEYPAACNALETLLIHRDLLRTPLFDQIIDMLRVEQVKIHAGPKFASYLTFSPSEVKSLRTEYGDLELCIEVVDNVQDAIDHIHKYGSSHTDVIVTEDENTAEFFLQHVDSACVFWNASTRFSDGYRFGLGAEVGISTSRIHARGPVGLEGLLTTKWLLRGKDHVVSDFSEHGSLKYLHENLPIPQRNTN.

The interval 1–361 is glutamate 5-kinase; that stretch reads MLSQVYRCGF…FFSEVKPAGP (361 aa). Residues S117, D223, and N246 each contribute to the substrate site. ATP is bound by residues 266 to 267 and 305 to 311; these read SD and MGGMEAK. An N6-succinyllysine mark is found at K311, K347, and K550. A gamma-glutamyl phosphate reductase region spans residues 362-795; the sequence is TVEQQGEMAR…NLPIPQRNTN (434 aa).

In the N-terminal section; belongs to the glutamate 5-kinase family. The protein in the C-terminal section; belongs to the gamma-glutamyl phosphate reductase family. Can form homodimers/multimers.

The protein localises to the mitochondrion. It is found in the mitochondrion matrix. It carries out the reaction L-glutamate + ATP = L-glutamyl 5-phosphate + ADP. The enzyme catalyses L-glutamate 5-semialdehyde + phosphate + NADP(+) = L-glutamyl 5-phosphate + NADPH + H(+). Its pathway is amino-acid biosynthesis; L-proline biosynthesis; L-glutamate 5-semialdehyde from L-glutamate: step 1/2. It participates in amino-acid biosynthesis; L-proline biosynthesis; L-glutamate 5-semialdehyde from L-glutamate: step 2/2. Isoform Short: Inhibited by L-ornithine with a Ki of approximately 0.25 mm. Isoform Long: Insensitive to ornithine inhibition. This is due to the two amino acid insert which abolishes feedback inhibition of P5CS activity by L-ornithine. In terms of biological role, bifunctional enzyme that converts glutamate to glutamate 5-semialdehyde, an intermediate in the biosynthesis of proline, ornithine and arginine. This is Delta-1-pyrroline-5-carboxylate synthase (ALDH18A1) from Homo sapiens (Human).